We begin with the raw amino-acid sequence, 652 residues long: Putative enzymatic polyprotein (652 aa).

In terms of domain architecture, Peptidase A2 spans 21 to 99; it reads YHGLFDTGAN…SPDIIIGATF (79 aa). Asp-26 is an active-site residue. The Reverse transcriptase domain occupies 231–413; that stretch reads FIEEKTNFED…EKIDFLGVQI (183 aa). Residues Asp-301, Asp-364, and Asp-365 each contribute to the Mg(2+) site.

It carries out the reaction DNA(n) + a 2'-deoxyribonucleoside 5'-triphosphate = DNA(n+1) + diphosphate. The enzyme catalyses Endonucleolytic cleavage to 5'-phosphomonoester.. In terms of biological role, encodes for at least two polypeptides: protease (PR) and reverse transcriptase (RT). The protease processes the polyprotein in cis. Reverse transcriptase is multifunctional enzyme that converts the viral RNA genome into dsDNA in viral cytoplasmic capsids. This enzyme displays a DNA polymerase activity that can copy either DNA or RNA templates, and a ribonuclease H (RNase H) activity that cleaves the RNA strand of RNA-DNA heteroduplexes in a partially processive 3'- to 5'-endonucleasic mode. Neo-synthesized pregenomic RNA (pgRNA) are encapsidated, and reverse-transcribed inside the nucleocapsid. Partial (+)DNA is synthesized from the (-)DNA template and generates the relaxed circular DNA (RC-DNA) genome. After budding and infection, the RC-DNA migrates in the nucleus, and is converted into a plasmid-like covalently closed circular DNA (cccDNA). This chain is Putative enzymatic polyprotein, found in Cassava vein mosaic virus (CsVMV).